Here is a 746-residue protein sequence, read N- to C-terminus: Zinc finger protein 366 (746 aa).

Residues 1-64 are disordered; that stretch reads MQKAMKMVKD…FRYEPSPGDL (64 aa). C2H2-type zinc fingers lie at residues 250–272, 278–300, 306–328, 334–356, 362–384, 390–412, 418–440, 446–468, 474–496, 502–524, and 530–553; these read WQCP…ILGH, HACS…MLTH, HKCQ…MMQH, HNCR…EAKH, NICV…LTTH, YNCS…MMKH, YICS…SLTH, HKCG…VLIH, YQCH…MIVH, FKCK…LHLH, and FKCL…KVKH. Positions 452–746 are interaction with NRIP1; sequence GREFTLLANM…MEKQAVLLGI (295 aa). A PXDLS motif is present at residues 587–591; sequence PFDLS. Residues 587–689 are disordered; the sequence is PFDLSQKRSA…DHEGSDIDCE (103 aa). Residues 613 to 627 are compositionally biased toward acidic residues; the sequence is CQEEEEEAGEEDNCY. The segment covering 675–689 has biased composition (basic and acidic residues); that stretch reads EDRSEDHEGSDIDCE.

As to quaternary structure, interacts with ESR1 and NRIP1. Interacts (via PXDLS motif) with CTBP1. In terms of tissue distribution, expressed in immature and mature dendritic cells (DCs).

It is found in the nucleus. In terms of biological role, has transcriptional repression activity. Acts as a corepressor of ESR1; the function seems to involve CTBP1 and histone deacetylases. This Mus musculus (Mouse) protein is Zinc finger protein 366.